The primary structure comprises 255 residues: Menaquinol:cytochrome c reductase cytochrome c subunit (255 aa).

The next 3 membrane-spanning stretches (helical) occupy residues 46–62 (WMVG…LTIV), 104–124 (VVGA…APFL), and 137–157 (VAVG…WQSV). One can recognise a Cytochrome c domain in the interval 178–253 (DTNAEGYKVF…ELAKFISETT (76 aa)). Residues Cys-192, Cys-195, and His-196 each contribute to the heme c site.

This sequence belongs to the cytochrome b family. In terms of assembly, the main subunits of the menaquinol:cytochrome c complex are a Rieske-type iron-sulfur protein (QcrA), a cytochrome b (QcrB) and a cytochrome c (QcrC). The cofactor is heme c.

Its subcellular location is the cell membrane. Component of the menaquinol:cytochrome c reductase complex. The sequence is that of Menaquinol:cytochrome c reductase cytochrome c subunit (qcrC) from Bacillus subtilis (strain 168).